A 504-amino-acid chain; its full sequence is Anaerobic nitric oxide reductase transcription regulator NorR (504 aa).

Asp-57 bears the 4-aspartylphosphate mark. Residues 187–416 enclose the Sigma-54 factor interaction domain; it reads MIGLSPGMTQ…LEHAIHRAVV (230 aa). ATP contacts are provided by residues 215 to 222 and 278 to 287; these read GETGTGKE and ADNGTLFLDE. The H-T-H motif DNA-binding region spans 479 to 498; it reads WAASARMLETDVANLHRLAK.

It participates in nitrogen metabolism; nitric oxide reduction. Required for the expression of anaerobic nitric oxide (NO) reductase, acts as a transcriptional activator for at least the norVW operon. Activation also requires sigma-54. The sequence is that of Anaerobic nitric oxide reductase transcription regulator NorR from Escherichia coli (strain SMS-3-5 / SECEC).